The primary structure comprises 529 residues: Bifunctional purine biosynthesis protein PurH (529 aa).

The MGS-like domain maps to Met1–Val148.

It belongs to the PurH family.

The catalysed reaction is (6R)-10-formyltetrahydrofolate + 5-amino-1-(5-phospho-beta-D-ribosyl)imidazole-4-carboxamide = 5-formamido-1-(5-phospho-D-ribosyl)imidazole-4-carboxamide + (6S)-5,6,7,8-tetrahydrofolate. It carries out the reaction IMP + H2O = 5-formamido-1-(5-phospho-D-ribosyl)imidazole-4-carboxamide. It participates in purine metabolism; IMP biosynthesis via de novo pathway; 5-formamido-1-(5-phospho-D-ribosyl)imidazole-4-carboxamide from 5-amino-1-(5-phospho-D-ribosyl)imidazole-4-carboxamide (10-formyl THF route): step 1/1. It functions in the pathway purine metabolism; IMP biosynthesis via de novo pathway; IMP from 5-formamido-1-(5-phospho-D-ribosyl)imidazole-4-carboxamide: step 1/1. The chain is Bifunctional purine biosynthesis protein PurH from Yersinia pseudotuberculosis serotype O:1b (strain IP 31758).